The chain runs to 149 residues: Ribonuclease H (149 aa).

Residues 1–145 (MKKVIIYTDG…CDKLANEAMD (145 aa)) form the RNase H type-1 domain. Mg(2+)-binding residues include D9, E50, D72, and D137.

It belongs to the RNase H family. As to quaternary structure, monomer. Mg(2+) is required as a cofactor.

It is found in the cytoplasm. The enzyme catalyses Endonucleolytic cleavage to 5'-phosphomonoester.. Functionally, endonuclease that specifically degrades the RNA of RNA-DNA hybrids. This chain is Ribonuclease H, found in Clostridium botulinum (strain ATCC 19397 / Type A).